The following is a 245-amino-acid chain: 1-(5-phosphoribosyl)-5-[(5-phosphoribosylamino)methylideneamino] imidazole-4-carboxamide isomerase (245 aa).

Residue Asp7 is the Proton acceptor of the active site. The Proton donor role is filled by Asp129.

This sequence belongs to the HisA/HisF family.

It localises to the cytoplasm. The enzyme catalyses 1-(5-phospho-beta-D-ribosyl)-5-[(5-phospho-beta-D-ribosylamino)methylideneamino]imidazole-4-carboxamide = 5-[(5-phospho-1-deoxy-D-ribulos-1-ylimino)methylamino]-1-(5-phospho-beta-D-ribosyl)imidazole-4-carboxamide. It participates in amino-acid biosynthesis; L-histidine biosynthesis; L-histidine from 5-phospho-alpha-D-ribose 1-diphosphate: step 4/9. The protein is 1-(5-phosphoribosyl)-5-[(5-phosphoribosylamino)methylideneamino] imidazole-4-carboxamide isomerase of Shewanella piezotolerans (strain WP3 / JCM 13877).